Reading from the N-terminus, the 330-residue chain is Aspartate--ammonia ligase (330 aa).

It belongs to the class-II aminoacyl-tRNA synthetase family. AsnA subfamily.

It is found in the cytoplasm. The catalysed reaction is L-aspartate + NH4(+) + ATP = L-asparagine + AMP + diphosphate + H(+). It participates in amino-acid biosynthesis; L-asparagine biosynthesis; L-asparagine from L-aspartate (ammonia route): step 1/1. This is Aspartate--ammonia ligase from Aeromonas salmonicida (strain A449).